The sequence spans 324 residues: Glutathione synthetase (324 aa).

Residues 129-313 (KLYALHFPDL…LEDEIVDWLV (185 aa)) enclose the ATP-grasp domain. Residue 155–211 (VDIHGRAVIKPLDGKGGEGIFLLARADRNLNAIIEASTAYGTRHVMVQRYLEESRQG) coordinates ATP. The Mg(2+) site is built by glutamate 284 and asparagine 286.

This sequence belongs to the prokaryotic GSH synthase family. It depends on Mg(2+) as a cofactor. Mn(2+) serves as cofactor.

It carries out the reaction gamma-L-glutamyl-L-cysteine + glycine + ATP = glutathione + ADP + phosphate + H(+). It functions in the pathway sulfur metabolism; glutathione biosynthesis; glutathione from L-cysteine and L-glutamate: step 2/2. The polypeptide is Glutathione synthetase (Gloeobacter violaceus (strain ATCC 29082 / PCC 7421)).